We begin with the raw amino-acid sequence, 479 residues long: Ribosomal RNA small subunit methyltransferase F (479 aa).

S-adenosyl-L-methionine-binding positions include 125-131 (AAAPGSK), E149, D176, and D194. C247 serves as the catalytic Nucleophile.

This sequence belongs to the class I-like SAM-binding methyltransferase superfamily. RsmB/NOP family.

It is found in the cytoplasm. The enzyme catalyses cytidine(1407) in 16S rRNA + S-adenosyl-L-methionine = 5-methylcytidine(1407) in 16S rRNA + S-adenosyl-L-homocysteine + H(+). Functionally, specifically methylates the cytosine at position 1407 (m5C1407) of 16S rRNA. The sequence is that of Ribosomal RNA small subunit methyltransferase F from Escherichia coli O81 (strain ED1a).